Consider the following 184-residue polypeptide: Orotate phosphoribosyltransferase (184 aa).

5-phospho-alpha-D-ribose 1-diphosphate-binding positions include R99, K100, K103, H105, and 125 to 133 (EDTTTTGNS). The orotate site is built by T129 and R157.

It belongs to the purine/pyrimidine phosphoribosyltransferase family. PyrE subfamily. In terms of assembly, homodimer. It depends on Mg(2+) as a cofactor.

It catalyses the reaction orotidine 5'-phosphate + diphosphate = orotate + 5-phospho-alpha-D-ribose 1-diphosphate. It functions in the pathway pyrimidine metabolism; UMP biosynthesis via de novo pathway; UMP from orotate: step 1/2. Functionally, catalyzes the transfer of a ribosyl phosphate group from 5-phosphoribose 1-diphosphate to orotate, leading to the formation of orotidine monophosphate (OMP). In Corynebacterium glutamicum (strain ATCC 13032 / DSM 20300 / JCM 1318 / BCRC 11384 / CCUG 27702 / LMG 3730 / NBRC 12168 / NCIMB 10025 / NRRL B-2784 / 534), this protein is Orotate phosphoribosyltransferase.